The sequence spans 61 residues: Large ribosomal subunit protein bL32 (61 aa).

Belongs to the bacterial ribosomal protein bL32 family.

The chain is Large ribosomal subunit protein bL32 from Hyphomonas neptunium (strain ATCC 15444).